We begin with the raw amino-acid sequence, 145 residues long: D-aminoacyl-tRNA deacylase (145 aa).

A Gly-cisPro motif, important for rejection of L-amino acids motif is present at residues 137 to 138 (GP).

This sequence belongs to the DTD family. In terms of assembly, homodimer.

It is found in the cytoplasm. The enzyme catalyses glycyl-tRNA(Ala) + H2O = tRNA(Ala) + glycine + H(+). It carries out the reaction a D-aminoacyl-tRNA + H2O = a tRNA + a D-alpha-amino acid + H(+). Its function is as follows. An aminoacyl-tRNA editing enzyme that deacylates mischarged D-aminoacyl-tRNAs. Also deacylates mischarged glycyl-tRNA(Ala), protecting cells against glycine mischarging by AlaRS. Acts via tRNA-based rather than protein-based catalysis; rejects L-amino acids rather than detecting D-amino acids in the active site. By recycling D-aminoacyl-tRNA to D-amino acids and free tRNA molecules, this enzyme counteracts the toxicity associated with the formation of D-aminoacyl-tRNA entities in vivo and helps enforce protein L-homochirality. The protein is D-aminoacyl-tRNA deacylase of Shewanella baltica (strain OS195).